A 146-amino-acid polypeptide reads, in one-letter code: Metallothiol transferase FosB (146 aa).

In terms of domain architecture, VOC spans 4-120 (GINHMTFSVS…DGHLLEVHTG (117 aa)). Mg(2+) is bound by residues His7, His66, and Glu116. Glu116 functions as the Proton donor/acceptor in the catalytic mechanism.

Belongs to the fosfomycin resistance protein family. FosB subfamily. As to quaternary structure, homodimer. Mg(2+) is required as a cofactor.

It localises to the cytoplasm. Functionally, metallothiol transferase which confers resistance to fosfomycin by catalyzing the addition of a thiol cofactor to fosfomycin. L-cysteine is probably the physiological thiol donor. The protein is Metallothiol transferase FosB of Shouchella clausii (strain KSM-K16) (Alkalihalobacillus clausii).